Consider the following 101-residue polypeptide: MAKICMIEREQKRRDTVKKYAAKRAELLAVINDANASAEDRRAARQKLQSLPRNSSPVRQRNRCALTGRPRGVFSKFGIARSKLRELMMRGEVPGVTKASW.

A disordered region spans residues A36–R61. Residues K47–R59 show a composition bias toward polar residues.

It belongs to the universal ribosomal protein uS14 family. In terms of assembly, part of the 30S ribosomal subunit. Contacts proteins S3 and S10.

Binds 16S rRNA, required for the assembly of 30S particles and may also be responsible for determining the conformation of the 16S rRNA at the A site. In Methylobacillus flagellatus (strain ATCC 51484 / DSM 6875 / VKM B-1610 / KT), this protein is Small ribosomal subunit protein uS14.